A 361-amino-acid chain; its full sequence is 3-dehydroquinate synthase (361 aa).

Residues 104–108 (GVIGD), 128–129 (TT), K140, and K149 each bind NAD(+). 3 residues coordinate Zn(2+): E182, H245, and H262.

The protein belongs to the sugar phosphate cyclases superfamily. Dehydroquinate synthase family. The cofactor is NAD(+). Co(2+) is required as a cofactor. It depends on Zn(2+) as a cofactor.

Its subcellular location is the cytoplasm. It carries out the reaction 7-phospho-2-dehydro-3-deoxy-D-arabino-heptonate = 3-dehydroquinate + phosphate. It participates in metabolic intermediate biosynthesis; chorismate biosynthesis; chorismate from D-erythrose 4-phosphate and phosphoenolpyruvate: step 2/7. Functionally, catalyzes the conversion of 3-deoxy-D-arabino-heptulosonate 7-phosphate (DAHP) to dehydroquinate (DHQ). The polypeptide is 3-dehydroquinate synthase (Halalkalibacterium halodurans (strain ATCC BAA-125 / DSM 18197 / FERM 7344 / JCM 9153 / C-125) (Bacillus halodurans)).